The following is a 329-amino-acid chain: Ephrin-B1 (329 aa).

Residues 1–20 (MEGLRRLLGLLLVLYRLCSA) form the signal peptide. At 21–226 (LGKNLEPVTW…FFNSKIAVFA (206 aa)) the chain is on the extracellular side. Residues 23 to 157 (KNLEPVTWNS…TRSMKIIMKV (135 aa)) enclose the Ephrin RBD domain. 2 cysteine pairs are disulfide-bonded: cysteine 57–cysteine 94 and cysteine 82–cysteine 146. N-linked (GlcNAc...) asparagine glycosylation is present at asparagine 132. The disordered stretch occupies residues 163–192 (AVPPEQLTTTRPSKEADNTGKIATFGPWNG). The N-linked (GlcNAc...) asparagine glycan is linked to asparagine 203. Residues 227–247 (AIGAGCVIFILIIIFLVVLLI) form a helical membrane-spanning segment. Over 248-329 (KIRKRHRKHT…QSPANIYYKV (82 aa)) the chain is Cytoplasmic. A PDZ-binding motif is present at residues 327–329 (YKV).

It belongs to the ephrin family. In terms of assembly, interacts with TLE4 through the PDZ-binding motif. Inducible phosphorylation of tyrosine residues in the cytoplasmic domain. Tyrosine phosphorylation inhibits TLE4-binding. In terms of tissue distribution, expressed at low levels in most tissues with highest levels in the kidney, oocytes, ovary and testis.

The protein localises to the membrane. In terms of biological role, cell surface transmembrane ligand for Eph receptors, a family of receptor tyrosine kinases which are crucial for migration, repulsion and adhesion during neuronal, vascular and epithelial development. Binds promiscuously Eph receptors residing on adjacent cells, leading to contact-dependent bidirectional signaling into neighboring cells. The signaling pathway downstream of the receptor is referred to as forward signaling while the signaling pathway downstream of the ephrin ligand is referred to as reverse signaling. May have a role in the developing mesenchymal and nervous tissue. This is Ephrin-B1 (efnb1) from Xenopus laevis (African clawed frog).